The chain runs to 96 residues: Co-chaperonin GroES (96 aa).

The protein belongs to the GroES chaperonin family. Heptamer of 7 subunits arranged in a ring. Interacts with the chaperonin GroEL.

It is found in the cytoplasm. Its function is as follows. Together with the chaperonin GroEL, plays an essential role in assisting protein folding. The GroEL-GroES system forms a nano-cage that allows encapsulation of the non-native substrate proteins and provides a physical environment optimized to promote and accelerate protein folding. GroES binds to the apical surface of the GroEL ring, thereby capping the opening of the GroEL channel. The protein is Co-chaperonin GroES of Solidesulfovibrio magneticus (strain ATCC 700980 / DSM 13731 / RS-1) (Desulfovibrio magneticus).